Reading from the N-terminus, the 53-residue chain is Large ribosomal subunit protein bL32c (53 aa).

This sequence belongs to the bacterial ribosomal protein bL32 family.

It is found in the plastid. Its subcellular location is the chloroplast. The protein is Large ribosomal subunit protein bL32c of Phaseolus vulgaris (Kidney bean).